Here is a 365-residue protein sequence, read N- to C-terminus: UDP-N-acetylglucosamine--N-acetylmuramyl-(pentapeptide) pyrophosphoryl-undecaprenol N-acetylglucosamine transferase (365 aa).

UDP-N-acetyl-alpha-D-glucosamine is bound by residues 17-19 (TGG), Asn-129, Arg-167, Ser-194, Ile-250, 269-274 (ALTVSE), and Gln-295.

It belongs to the glycosyltransferase 28 family. MurG subfamily.

It is found in the cell inner membrane. The catalysed reaction is di-trans,octa-cis-undecaprenyl diphospho-N-acetyl-alpha-D-muramoyl-L-alanyl-D-glutamyl-meso-2,6-diaminopimeloyl-D-alanyl-D-alanine + UDP-N-acetyl-alpha-D-glucosamine = di-trans,octa-cis-undecaprenyl diphospho-[N-acetyl-alpha-D-glucosaminyl-(1-&gt;4)]-N-acetyl-alpha-D-muramoyl-L-alanyl-D-glutamyl-meso-2,6-diaminopimeloyl-D-alanyl-D-alanine + UDP + H(+). It participates in cell wall biogenesis; peptidoglycan biosynthesis. In terms of biological role, cell wall formation. Catalyzes the transfer of a GlcNAc subunit on undecaprenyl-pyrophosphoryl-MurNAc-pentapeptide (lipid intermediate I) to form undecaprenyl-pyrophosphoryl-MurNAc-(pentapeptide)GlcNAc (lipid intermediate II). This chain is UDP-N-acetylglucosamine--N-acetylmuramyl-(pentapeptide) pyrophosphoryl-undecaprenol N-acetylglucosamine transferase, found in Shewanella woodyi (strain ATCC 51908 / MS32).